A 63-amino-acid polypeptide reads, in one-letter code: Putative ankyrin repeat protein RF_p14 (63 aa).

ANK repeat units follow at residues 11–43 (KLNQ…CRDH) and 44–63 (QGDT…ILDI).

The sequence is that of Putative ankyrin repeat protein RF_p14 from Rickettsia felis (strain ATCC VR-1525 / URRWXCal2) (Rickettsia azadi).